Here is a 301-residue protein sequence, read N- to C-terminus: Polyamine aminopropyltransferase (301 aa).

The PABS domain occupies 4–240 (WHWLLEWQTP…GLWGFVYGGV (237 aa)). Glutamine 33 contacts S-methyl-5'-thioadenosine. Positions 64 and 89 each coordinate spermidine. Residues aspartate 109 and 141–142 (DG) each bind S-methyl-5'-thioadenosine. Residue aspartate 159 is the Proton acceptor of the active site.

This sequence belongs to the spermidine/spermine synthase family. Homotrimer.

The protein resides in the cytoplasm. It catalyses the reaction S-adenosyl 3-(methylsulfanyl)propylamine + putrescine = S-methyl-5'-thioadenosine + spermidine + H(+). It carries out the reaction S-adenosyl 3-(methylsulfanyl)propylamine + propane-1,3-diamine = norspermidine + S-methyl-5'-thioadenosine + H(+). The enzyme catalyses norspermidine + S-adenosyl 3-(methylsulfanyl)propylamine = norspermine + S-methyl-5'-thioadenosine + H(+). The catalysed reaction is S-adenosyl 3-(methylsulfanyl)propylamine + spermidine = thermospermine + S-methyl-5'-thioadenosine + H(+). It participates in amine and polyamine biosynthesis; spermidine biosynthesis; spermidine from putrescine: step 1/1. Competitively inhibited by 5-methylthioadenosine, 5-methylthiotubercidin, S-adenosyl(5)-3-thiopropylamine and S-adenosyl-3-thio-l,8-diaminooctane. Involved in the biosynthesis of polyamines which are thought to support the growth of thermophilic microorganisms under high-temperature conditions. It seems that long-chain and branched-chain of polyamines effectively stabilize DNA and RNA, respectively. Catalyzes the irreversible transfer of a propylamine group from the amino donor S-adenosylmethioninamine (decarboxy-AdoMet) to various amine acceptors such as putrescine (1,4-diaminobutane), 1,3-diaminopropane, sym-norspermidine and spermidine. The biosynthesis of caldopentamine from norspermine has been also observed, but with a very low activity. The reaction involves a nucleophilic attack on the C-3 methylene of the propylamine moiety adjacent to the positively charged sulfur of decarboxy-AdoMet. S-adenosylmethioninamine is the only amino donor. The polypeptide is Polyamine aminopropyltransferase (Saccharolobus solfataricus (strain ATCC 35092 / DSM 1617 / JCM 11322 / P2) (Sulfolobus solfataricus)).